The following is a 324-amino-acid chain: Malate dehydrogenase (324 aa).

NAD(+) contacts are provided by residues 7–13 (GAAGGIG) and D34. Substrate-binding residues include R88 and R94. NAD(+)-binding positions include N101 and 124–126 (VTN). N126 and R160 together coordinate substrate. Residue H184 is the Proton acceptor of the active site. NAD(+) is bound at residue M238.

The protein belongs to the LDH/MDH superfamily. MDH type 1 family. In terms of assembly, homodimer.

It carries out the reaction (S)-malate + NAD(+) = oxaloacetate + NADH + H(+). Its function is as follows. Catalyzes the reversible oxidation of malate to oxaloacetate. This chain is Malate dehydrogenase, found in Haemophilus ducreyi (strain 35000HP / ATCC 700724).